We begin with the raw amino-acid sequence, 480 residues long: Glycogen synthase (480 aa).

Lys-15 is a binding site for ADP-alpha-D-glucose.

Belongs to the glycosyltransferase 1 family. Bacterial/plant glycogen synthase subfamily.

It catalyses the reaction [(1-&gt;4)-alpha-D-glucosyl](n) + ADP-alpha-D-glucose = [(1-&gt;4)-alpha-D-glucosyl](n+1) + ADP + H(+). It functions in the pathway glycan biosynthesis; glycogen biosynthesis. Functionally, synthesizes alpha-1,4-glucan chains using ADP-glucose. The sequence is that of Glycogen synthase from Rhizobium johnstonii (strain DSM 114642 / LMG 32736 / 3841) (Rhizobium leguminosarum bv. viciae).